Here is a 111-residue protein sequence, read N- to C-terminus: Putative protein YddJ (111 aa).

This chain is Putative protein YddJ (yddJ), found in Escherichia coli (strain K12).